The sequence spans 501 residues: Lysine--tRNA ligase (501 aa).

The Mg(2+) site is built by E402 and E409.

The protein belongs to the class-II aminoacyl-tRNA synthetase family. In terms of assembly, homodimer. Requires Mg(2+) as cofactor.

Its subcellular location is the cytoplasm. It carries out the reaction tRNA(Lys) + L-lysine + ATP = L-lysyl-tRNA(Lys) + AMP + diphosphate. The polypeptide is Lysine--tRNA ligase (Helicobacter pylori (strain Shi470)).